Here is a 436-residue protein sequence, read N- to C-terminus: tRNA-2-methylthio-N(6)-dimethylallyladenosine synthase (436 aa).

The region spanning 5-121 is the MTTase N-terminal domain; it reads RKLFIKTYGC…LPDMLDRTEG (117 aa). Residues cysteine 14, cysteine 50, cysteine 84, cysteine 158, cysteine 162, and cysteine 165 each coordinate [4Fe-4S] cluster. Residues 144-374 form the Radical SAM core domain; the sequence is ATRGPAAFLT…TEQQRAAQMA (231 aa). Residues 373–435 enclose the TRAM domain; that stretch reads MAMVGREVGV…PNSLAGERLG (63 aa).

The protein belongs to the methylthiotransferase family. MiaB subfamily. Monomer. The cofactor is [4Fe-4S] cluster.

Its subcellular location is the cytoplasm. The catalysed reaction is N(6)-dimethylallyladenosine(37) in tRNA + (sulfur carrier)-SH + AH2 + 2 S-adenosyl-L-methionine = 2-methylsulfanyl-N(6)-dimethylallyladenosine(37) in tRNA + (sulfur carrier)-H + 5'-deoxyadenosine + L-methionine + A + S-adenosyl-L-homocysteine + 2 H(+). Catalyzes the methylthiolation of N6-(dimethylallyl)adenosine (i(6)A), leading to the formation of 2-methylthio-N6-(dimethylallyl)adenosine (ms(2)i(6)A) at position 37 in tRNAs that read codons beginning with uridine. In Cereibacter sphaeroides (strain ATCC 17029 / ATH 2.4.9) (Rhodobacter sphaeroides), this protein is tRNA-2-methylthio-N(6)-dimethylallyladenosine synthase.